The primary structure comprises 520 residues: Keratin, type II cytoskeletal 4 (520 aa).

A head region spans residues 1 to 136 (MIARQQCVRG…DPEIQKVRTE (136 aa)). Arg13 is subject to Omega-N-methylarginine. The coil 1A stretch occupies residues 137–172 (EREQIKLLNNKFASFIDKVQFLEQQNKVLETKWNLL). The region spanning 137–450 (EREQIKLLNN…KLLEGEEYRM (314 aa)) is the IF rod domain. The interval 173–191 (QQQTTTTSSKNLEPLFETY) is linker 1. The coil 1B stretch occupies residues 192–284 (LSVLRKQLDT…LYDAELSQMQ (93 aa)). The interval 285–307 (THVSDTSVVLSMDNNRNLDLDSI) is linker 12. The interval 308–447 (IAEVRAQYEE…TYRKLLEGEE (140 aa)) is coil 2. Positions 448–520 (YRMSGECQSA…ISTTTLNKRR (73 aa)) are tail. Residues 500–520 (GSVSGSSSSKIISTTTLNKRR) are disordered. Low complexity predominate over residues 503–514 (SGSSSSKIISTT).

It belongs to the intermediate filament family. In terms of assembly, heterotetramer of two type I and two type II keratins. Keratin-4 is generally associated with keratin-13. In terms of tissue distribution, detected in the suprabasal layer of the stratified epithelium of the esophagus, exocervix, vagina, mouth and lingual mucosa, and in cells and cell clusters in the mucosa and serous gland ducts of the esophageal submucosa (at protein level). Expressed widely in the exocervix and esophageal epithelium, with lowest levels detected in the basal cell layer.

The sequence is that of Keratin, type II cytoskeletal 4 (KRT4) from Homo sapiens (Human).